The primary structure comprises 383 residues: Probable indole-3-pyruvate monooxygenase YUCCA10 (383 aa).

Residue 9 to 14 (GAGPAG) coordinates FAD. Residue 177–182 (GGGNSG) participates in NADP(+) binding.

It belongs to the FMO family. FAD is required as a cofactor.

The catalysed reaction is indole-3-pyruvate + NADPH + O2 + H(+) = (indol-3-yl)acetate + CO2 + NADP(+) + H2O. Its pathway is plant hormone metabolism; auxin biosynthesis. Involved in auxin biosynthesis. This Arabidopsis thaliana (Mouse-ear cress) protein is Probable indole-3-pyruvate monooxygenase YUCCA10 (YUC10).